Here is a 330-residue protein sequence, read N- to C-terminus: Clp protease adapter protein ClpF, chloroplastic (330 aa).

The transit peptide at 1 to 65 (MVQSQSLSTL…KSLKQRNLLR (65 aa)) directs the protein to the chloroplast. Residues 66 to 138 (VEARWPFQGG…VEEESIRLQE (73 aa)) form an NTD, required for CLPS1-binding region. 2 coiled-coil regions span residues 112–139 (NLEQYDIAQQLREKLTEVEEESIRLQEG) and 175–195 (AAKLRDEISKLEAESLAVSAK). In terms of domain architecture, UVR spans 153–188 (GISIIRLRADLQNAIDSEDYGLAAKLRDEISKLEAE). Residues 203–310 (EYAFRLGQKL…TAGDFIPVKQ (108 aa)) form a yccV-like region.

Binds to CLPC1 and CLPC2. Interacts with ClpS1; this interaction stimulates their association with ClpC. Associates with the Clp substrate HEMA1 (GluTR). Expressed constitutively in photosynthetic tissues such as leaves, stems and flowers, and, at low levels, in siliques.

It is found in the plastid. The protein localises to the chloroplast. Functionally, clp protease adapter that facilitates CLPS1 recruitment to ClpC chaperones thus forming a binary adapter for selective substrate recognition and delivery to plastid Clp protease system (CLPC). This Arabidopsis thaliana (Mouse-ear cress) protein is Clp protease adapter protein ClpF, chloroplastic.